A 112-amino-acid chain; its full sequence is Abdominal ganglion neuropeptides L5-67 (112 aa).

A signal peptide spans 1–23; it reads MKTAVLLVCLAYVMAAILSLCAS. Phenylalanine 33 carries the phenylalanine amide modification.

In terms of processing, the prohormone is proteolytically cleaved in 2 steps, yielding first 2 products: luqin and PRMP. In the second step, PRMP is cleaved to yield luqin-B and luqin-C. In terms of tissue distribution, neurons L2-4 and L6, also called giant dorsal LUQ (Left Upper Quadrant) neurons of the abdominal ganglion. Also expressed in smaller neurons in the CNS and in peripheral organs such as the kidney.

It localises to the secreted. This is Abdominal ganglion neuropeptides L5-67 from Aplysia californica (California sea hare).